We begin with the raw amino-acid sequence, 166 residues long: Small ribosomal subunit protein uS5 (166 aa).

In terms of domain architecture, S5 DRBM spans 11 to 74; the sequence is LQEKLIAVNR…EQAKRNLNKV (64 aa).

It belongs to the universal ribosomal protein uS5 family. Part of the 30S ribosomal subunit. Contacts proteins S4 and S8.

Functionally, with S4 and S12 plays an important role in translational accuracy. Its function is as follows. Located at the back of the 30S subunit body where it stabilizes the conformation of the head with respect to the body. This chain is Small ribosomal subunit protein uS5, found in Aeromonas hydrophila subsp. hydrophila (strain ATCC 7966 / DSM 30187 / BCRC 13018 / CCUG 14551 / JCM 1027 / KCTC 2358 / NCIMB 9240 / NCTC 8049).